The primary structure comprises 433 residues: MAKVDQNEALFERAQKTIPGGVNSPVRAFRQVGGIPRFVAKAKGSYFWDANDQRYIDLIMSWGPMIVGHANPEVVAAVQKAAETSFSYGAPTEGEIELAERICALMPSVEQVRMVSSGTEATMSALRLARGYTGRDLIIKFEGCYHGHADSLLVKVGSGLLTFADSTQNAPSSGGVPQDLVKHTLVLPYNDVAAIEEVFQKQGDQIAAVIIEPIAGNMNLIQPSKAFLAAIRTLTAKHGAVLIYDEVMTGFRVALGGAQSLQGITPDLTCLGKVMGGGMPMAAFGGKKEIMSKLAPLGNVYQAGTLSGNPVAVAAGLKTLEIVSREGFYECLTGQTQKLMAGLKAAADNNTVPFTVDSVGGMFGFYFVDQVPTSYEAVTKTNIDAFKKFFHLMLDEGVYLAPSAYEAGFISIAHDNAVLEEIIAAAESSFKKL.

The residue at position 273 (Lys-273) is an N6-(pyridoxal phosphate)lysine.

Belongs to the class-III pyridoxal-phosphate-dependent aminotransferase family. HemL subfamily. In terms of assembly, homodimer. The cofactor is pyridoxal 5'-phosphate.

Its subcellular location is the cytoplasm. The enzyme catalyses (S)-4-amino-5-oxopentanoate = 5-aminolevulinate. Its pathway is porphyrin-containing compound metabolism; protoporphyrin-IX biosynthesis; 5-aminolevulinate from L-glutamyl-tRNA(Glu): step 2/2. This is Glutamate-1-semialdehyde 2,1-aminomutase from Polynucleobacter necessarius subsp. necessarius (strain STIR1).